The following is a 2176-amino-acid chain: Nonribosomal peptide synthetase sirP (2176 aa).

Basic and acidic residues predominate over residues 16–31 (EGLTGDDHSPESRRDF). Positions 16-38 (EGLTGDDHSPESRRDFPMSQSSG) are disordered. Residues 51 to 434 (FERIASQFPE…LGRKDRVVKN (384 aa)) are adenylation 1. A Carrier 1 domain is found at 534–610 (SSPSSNLYVV…RICDTLSATI (77 aa)). Ser571 carries the O-(pantetheine 4'-phosphoryl)serine modification. The condensation 1 stretch occupies residues 643 to 1073 (YMTAIQVNMI…MMNQLEINDL (431 aa)). Residues 1094-1474 (FEEVVDTWPD…GRIDNQVKVR (381 aa)) are adenylation 2. One can recognise a Carrier 2 domain in the interval 1570–1646 (PIEGTTERII…DLALAIDKHI (77 aa)). Ser1606 carries the post-translational modification O-(pantetheine 4'-phosphoryl)serine. Residues 1661–2070 (QNTVLSHLEE…VQLMAAFRYL (410 aa)) are condensation 2. The 71-residue stretch at 2106-2176 (QEMIDLVREA…TAELIAGAVE (71 aa)) folds into the Carrier 3 domain. Ser2140 is modified (O-(pantetheine 4'-phosphoryl)serine).

Belongs to the NRP synthetase family.

Its pathway is mycotoxin biosynthesis. Functionally, nonribosomal peptide synthetase; part of the gene cluster that mediates the biosynthesis of sirodesmin PL, an epipolythiodioxopiperazine (ETP) characterized by a disulfide bridged cyclic dipeptide and that acts as a phytotoxin which is involved in the blackleg didease of canola. SirD catalyzes the O-prenylation of L-tyrosine (L-Tyr) in the presence of dimethylallyl diphosphate (DMAPP) to yield 4-O-dimethylallyl-L-Tyr, and therefore represents probably the first pathway-specific enzyme in the biosynthesis of sirodesmin PL. 4-O-dimethylallyl-L-Tyr, then undergoes condensation with L-Ser in a reaction catalyzed by the non-ribosomal peptide synthase sirP to form the diketopiperazine (DKP) backbone. Further bishydroxylation of the DKP performed by the cytochrome P450 monooxygenase sirC leads to the production of the intermediate phomamide. This step is essential to form the reactive thiol group required for toxicity of sirodesmin PL. The next steps of sirodesmin biosynthesis are not well understood yet, but some predictions could be made from intermediate compounds identification. Phomamide is converted into phomalizarine via oxidation, probably by sirT. Further oxidation, methylation (by sirM or sirN) and reduction steps convert phomalizarine to deacetyl sirodesmin. Finally, acetyltransferase sirH probably acetylates deacetyl sirodesmin to produce sirodesmin PL. This chain is Nonribosomal peptide synthetase sirP, found in Leptosphaeria maculans (Blackleg fungus).